The chain runs to 234 residues: Mitochondrial assembly of ribosomal large subunit protein 1 (234 aa).

The disordered stretch occupies residues 63-88 (SEPGLEERAEGTVNEGRPESDAADHT).

Belongs to the Iojap/RsfS family. Associates with the mitochondrial ribosome large subunit (39S) via interaction with MRPL12 and/or MRPL14. The interaction generates steric hindrance that is expected to prevent premature association of the 28S and 39S ribosomal subunits. Interacts with intermediates of the mitochondrial ribosome large subunit (mt-LSU) (recruits the mitochondrial ribosome and complex I assembly factor AltMIEF1 and NDUFAB1); regulates mitochondrial ribosomes assembly. Interacts with MRPL12 and MRPL14.

The protein resides in the mitochondrion matrix. Functionally, required for normal mitochondrial ribosome function and mitochondrial translation. May play a role in ribosome biogenesis by preventing premature association of the 28S and 39S ribosomal subunits. Interacts with mitochondrial ribosomal protein uL14m (MRPL14), probably blocking formation of intersubunit bridge B8, preventing association of the 28S and 39S ribosomal subunits. Addition to isolated mitochondrial ribosomal subunits partially inhibits translation, probably by interfering with the association of the 28S and 39S ribosomal subunits and the formation of functional ribosomes. May also participate in the assembly and/or regulation of the stability of the large subunit of the mitochondrial ribosome. May function as a ribosomal silencing factor. The protein is Mitochondrial assembly of ribosomal large subunit protein 1 (MALSU1) of Homo sapiens (Human).